Here is a 545-residue protein sequence, read N- to C-terminus: Ribulokinase (545 aa).

Belongs to the ribulokinase family.

It catalyses the reaction D-ribulose + ATP = D-ribulose 5-phosphate + ADP + H(+). The enzyme catalyses L-ribulose + ATP = L-ribulose 5-phosphate + ADP + H(+). The protein operates within carbohydrate degradation; L-arabinose degradation via L-ribulose; D-xylulose 5-phosphate from L-arabinose (bacterial route): step 2/3. The chain is Ribulokinase from Staphylococcus aureus (strain MSSA476).